Here is a 549-residue protein sequence, read N- to C-terminus: MKRPKLKKASKRMTCHKRYKIQKKVREHHRKLRKEAKKRGHKKPRKDPGVPNSAPFKEALLREAELRKQRLEELKQQQKLDRQKELEKKRKLETNPDIKPSNVEPMEKEFGLCKTENKAKSGKQNSKKLYCQELKKVIEASDVVLEVLDARDPLGCRCPQVEEAIVQSGQKKLVLILNKSDLVPKENLESWLNYLKKELPTVVFRASTKPKDKGKITKRVKAKKNAAPFRSEVCFGKEGLWKLLGGFQETCSKAIRVGVIGFPNVGKSSIINSLKQEQMCNVGVSMGLTRSMQVVPLDKQITIIDSPSFIVSPLNSSSALALRSPASIEVVKPMEAASAILSQADARQVVLKYTVPGYRNSLEFFTVLAQRRGMHQKGGIPNVEGAAKLLWSEWTGASLAYYCHPPTSWTPPPYFNESIVVDMKSGFNLEELEKNNAQSIRAIKGPHLANSILFQSSGLTNGIIEEKDIHEELPKRKERKQEEREDDKDSDQETVDEEVDENSSGMFAAEETGEALSEETTAGEQSTRSFILDKIIEEDDAYDFSTDYV.

Over residues 1–45 (MKRPKLKKASKRMTCHKRYKIQKKVREHHRKLRKEAKKRGHKKPR) the composition is skewed to basic residues. Disordered regions lie at residues 1 to 56 (MKRP…SAPF) and 73 to 104 (ELKQ…SNVE). The tract at residues 2–46 (KRPKLKKASKRMTCHKRYKIQKKVREHHRKLRKEAKKRGHKKPRK) is basic. Residues 56 to 95 (FKEALLREAELRKQRLEELKQQQKLDRQKELEKKRKLETN) are a coiled coil. Positions 73–96 (ELKQQQKLDRQKELEKKRKLETNP) are enriched in basic and acidic residues. N6-acetyllysine is present on K79. Residues K91 and K99 each participate in a glycyl lysine isopeptide (Lys-Gly) (interchain with G-Cter in SUMO2) cross-link. S101 bears the Phosphoserine mark. Glycyl lysine isopeptide (Lys-Gly) (interchain with G-Cter in SUMO2) cross-links involve residues K114, K179, K196, K253, K267, and K275. In terms of domain architecture, CP-type G spans 131–312 (CQELKKVIEA…IIDSPSFIVS (182 aa)). Residue 178-181 (NKSD) participates in GTP binding. GTP is bound at residue 261–268 (GFPNVGKS). An intermediate region spans residues 282 to 456 (VGVSMGLTRS…HLANSILFQS (175 aa)). Residue 305–308 (DSPS) participates in GTP binding. Residues 465–543 (EEKDIHEELP…KIIEEDDAYD (79 aa)) are acidic. Residues 474–483 (PKRKERKQEE) are compositionally biased toward basic and acidic residues. The disordered stretch occupies residues 474–532 (PKRKERKQEEREDDKDSDQETVDEEVDENSSGMFAAEETGEALSEETTAGEQSTRSFIL). Acidic residues predominate over residues 484 to 501 (REDDKDSDQETVDEEVDE). A phosphoserine mark is found at S490, S504, S517, and S529. Positions 518–529 (EETTAGEQSTRS) are enriched in polar residues.

It belongs to the TRAFAC class YlqF/YawG GTPase family. Interacts with MDM2; this interaction stabilizes MDM2. Interaction with MDM2 occurs in the nucleoplasm and is triggered by a nucleolar release mechanism, such as mitosis-induced nucleolar disassembly. Indirectly interacts with TP53, via MDM2-binding. Interacts with TSC22D1 isoform 2. In terms of tissue distribution, increased levels in lung tissue in cancer patients.

It localises to the nucleus. The protein resides in the nucleolus. May be required to maintain the proliferative capacity of stem cells. Stabilizes MDM2 by preventing its ubiquitination, and hence proteasomal degradation. In Homo sapiens (Human), this protein is Guanine nucleotide-binding protein-like 3 (GNL3).